We begin with the raw amino-acid sequence, 348 residues long: MSFVDEAKIHVKGGKGGDGCVSFRREKFIEFGGPDGGNGGNGGSVIFIASSAVNTLLYFRYNQHIRAENGKAGSGKGKFGAAGRNRVVEVPVGTQLYDEDGNTLIADLNNIGQQYTVAAGGRGGIGNAQYKSSTNRAPTYFTYGTLGEEHCVLLKLKIVSDVGIIGMPNAGKSSLLSRCTASKTKVSDYPFTTLEPHLGVAYANGCELVLADIPGLIENASSGAGLGHKFLKHIERCVILLHLVDCSLPDIVSAYELVRQELKLHSQELAGKQEVVILNKCDLLSEGEVREKQKLLESSTKKEVITLSMGDELDSLIVFLHAQVKKAVVTEPSDTSFDPFLYVHYNKK.

Residues 1–159 enclose the Obg domain; the sequence is MSFVDEAKIH…HCVLLKLKIV (159 aa). The OBG-type G domain occupies 160-329; that stretch reads SDVGIIGMPN…LHAQVKKAVV (170 aa). Residues 166–173, 191–195, 212–215, 279–282, and 310–312 each bind GTP; these read GMPNAGKS, FTTLE, DIPG, NKCD, and GDE. Mg(2+) contacts are provided by Ser173 and Thr193.

The protein belongs to the TRAFAC class OBG-HflX-like GTPase superfamily. OBG GTPase family. Monomer. Mg(2+) serves as cofactor.

It localises to the cytoplasm. Functionally, an essential GTPase which binds GTP, GDP and possibly (p)ppGpp with moderate affinity, with high nucleotide exchange rates and a fairly low GTP hydrolysis rate. Plays a role in control of the cell cycle, stress response, ribosome biogenesis and in those bacteria that undergo differentiation, in morphogenesis control. The sequence is that of GTPase Obg 1 from Anaplasma marginale (strain St. Maries).